A 184-amino-acid polypeptide reads, in one-letter code: Ribosome-recycling factor (184 aa).

This sequence belongs to the RRF family.

It is found in the cytoplasm. Functionally, responsible for the release of ribosomes from messenger RNA at the termination of protein biosynthesis. May increase the efficiency of translation by recycling ribosomes from one round of translation to another. The sequence is that of Ribosome-recycling factor from Borrelia recurrentis (strain A1).